A 141-amino-acid chain; its full sequence is Auxin-responsive protein SAUR64 (141 aa).

Belongs to the ARG7 family.

It is found in the cell membrane. Functionally, may promote auxin-stimulated organ elongation, such as hypocotyls, stamen filaments and petals. This chain is Auxin-responsive protein SAUR64, found in Arabidopsis thaliana (Mouse-ear cress).